The chain runs to 255 residues: Taurine import ATP-binding protein TauB (255 aa).

The region spanning 2–229 (LQISHLYADY…RFVAGESSRS (228 aa)) is the ABC transporter domain. 34–41 (GPSGCGKT) is a binding site for ATP.

The protein belongs to the ABC transporter superfamily. Taurine importer (TC 3.A.1.17.1) family. The complex is composed of two ATP-binding proteins (TauB), two transmembrane proteins (TauC) and a solute-binding protein (TauA).

The protein resides in the cell inner membrane. It carries out the reaction taurine(out) + ATP + H2O = taurine(in) + ADP + phosphate + H(+). Part of the ABC transporter complex TauABC involved in taurine import. Responsible for energy coupling to the transport system. This Escherichia coli O6:H1 (strain CFT073 / ATCC 700928 / UPEC) protein is Taurine import ATP-binding protein TauB.